We begin with the raw amino-acid sequence, 487 residues long: Probable glutamate receptor (487 aa).

The first 23 residues, 1–23 (MDKGQHFVFFVLTTVLLLRESSH), serve as a signal peptide directing secretion. The Extracellular segment spans residues 24 to 169 (AGAMRNDAAA…FFHFLAPFSK (146 aa)). Residue Asn-104 is glycosylated (N-linked (GlcNAc...) asparagine). The helical transmembrane segment at 170–190 (ETWTGLLFAYILTCFCLFLVA) threads the bilayer. Topologically, residues 191–235 (RLSPCEWNEPKNEENHFTFLNSLWFGAGALALQGVTPRPKALSVR) are cytoplasmic. A helical transmembrane segment spans residues 236-256 (VIAAIWWLFTIALLAAYIANF). The Extracellular portion of the chain corresponds to 257–419 (TALLSSGSEQ…ERWSPLQPQA (163 aa)). The chain crosses the membrane as a helical span at residues 420–440 (LGGLFLTLAIGLALGVIAAVV). The Cytoplasmic portion of the chain corresponds to 441-487 (ELSNKSRHAAGHVKKSCCSIFTEEMCTRLRIKENTRQSQETSGRANA).

This sequence belongs to the glutamate-gated ion channel (TC 1.A.10.1) family.

The protein resides in the cell membrane. It localises to the postsynaptic cell membrane. Functionally, receptor for glutamate. L-glutamate acts as an excitatory neurotransmitter at many synapses in the central nervous system. The postsynaptic actions of Glu are mediated by a variety of receptors that are named according to their selective agonists. This chain is Probable glutamate receptor (KBP), found in Anas platyrhynchos (Mallard).